The primary structure comprises 79 residues: MSQLMGIITRLQSLQETAEAANEPMQRYFEVNGEKICSVKYFEKNQTFELTVFQKGEKPNTYPFDNIDMVSIEIFELLQ.

Residues 1–20 form the signal peptide; the sequence is MSQLMGIITRLQSLQETAEA.

This is an uncharacterized protein from Bacillus subtilis (strain 168).